A 353-amino-acid polypeptide reads, in one-letter code: 3-dehydroquinate synthase (353 aa).

NAD(+)-binding positions include 62–67 (DGEQYK), 96–100 (GVIGD), 120–121 (TT), K133, and K142. Residues E175, H236, and H253 each coordinate Zn(2+).

Belongs to the sugar phosphate cyclases superfamily. Dehydroquinate synthase family. NAD(+) is required as a cofactor. Requires Co(2+) as cofactor. The cofactor is Zn(2+).

It is found in the cytoplasm. The catalysed reaction is 7-phospho-2-dehydro-3-deoxy-D-arabino-heptonate = 3-dehydroquinate + phosphate. It functions in the pathway metabolic intermediate biosynthesis; chorismate biosynthesis; chorismate from D-erythrose 4-phosphate and phosphoenolpyruvate: step 2/7. Catalyzes the conversion of 3-deoxy-D-arabino-heptulosonate 7-phosphate (DAHP) to dehydroquinate (DHQ). This Helicobacter hepaticus (strain ATCC 51449 / 3B1) protein is 3-dehydroquinate synthase.